Consider the following 249-residue polypeptide: tRNA (guanine-N(7)-)-methyltransferase (249 aa).

Residues Glu80, Glu105, Asp132, and Asp155 each contribute to the S-adenosyl-L-methionine site. The active site involves Asp155. Substrate contacts are provided by residues Lys159, Asp191, and Thr228–Glu231.

The protein belongs to the class I-like SAM-binding methyltransferase superfamily. TrmB family.

It carries out the reaction guanosine(46) in tRNA + S-adenosyl-L-methionine = N(7)-methylguanosine(46) in tRNA + S-adenosyl-L-homocysteine. Its pathway is tRNA modification; N(7)-methylguanine-tRNA biosynthesis. Functionally, catalyzes the formation of N(7)-methylguanine at position 46 (m7G46) in tRNA. This Mannheimia succiniciproducens (strain KCTC 0769BP / MBEL55E) protein is tRNA (guanine-N(7)-)-methyltransferase.